Reading from the N-terminus, the 146-residue chain is MQLETSYLGTVKYKQEDIIVFQGGLPGFPEETEFILLPFNEQPPFYILQSVRTKEIGFVCINPFLFWPDYEVELADSVVRQLSAESEQDVAIFVFLTIQQPFSKSTANLRAPIAVHAKKRFAKQLMLDGERYSLKAPIHTAGKGGR.

This sequence belongs to the FliW family. In terms of assembly, interacts with translational regulator CsrA and flagellin(s).

The protein resides in the cytoplasm. Acts as an anti-CsrA protein, binds CsrA and prevents it from repressing translation of its target genes, one of which is flagellin. Binds to flagellin and participates in the assembly of the flagellum. The sequence is that of Flagellar assembly factor FliW from Shouchella clausii (strain KSM-K16) (Alkalihalobacillus clausii).